Reading from the N-terminus, the 343-residue chain is Heat-inducible transcription repressor HrcA (343 aa).

The protein belongs to the HrcA family.

Its function is as follows. Negative regulator of class I heat shock genes (grpE-dnaK-dnaJ and groELS operons). Prevents heat-shock induction of these operons. This Mycolicibacterium vanbaalenii (strain DSM 7251 / JCM 13017 / BCRC 16820 / KCTC 9966 / NRRL B-24157 / PYR-1) (Mycobacterium vanbaalenii) protein is Heat-inducible transcription repressor HrcA.